A 152-amino-acid polypeptide reads, in one-letter code: Small ribosomal subunit protein uS8m (152 aa).

It belongs to the universal ribosomal protein uS8 family. Component of the mitochondrial small ribosomal subunit (mt-SSU). Mature yeast 74S mitochondrial ribosomes consist of a small (37S) and a large (54S) subunit. The 37S small subunit contains a 15S ribosomal RNA (15S mt-rRNA) and at least 32 different proteins. The 54S large subunit contains a 21S rRNA (21S mt-rRNA) and at least 45 different proteins.

It localises to the mitochondrion. In terms of biological role, component of the mitochondrial ribosome (mitoribosome), a dedicated translation machinery responsible for the synthesis of mitochondrial genome-encoded proteins, including at least some of the essential transmembrane subunits of the mitochondrial respiratory chain. The mitoribosomes are attached to the mitochondrial inner membrane and translation products are cotranslationally integrated into the membrane. In Schizosaccharomyces pombe (strain 972 / ATCC 24843) (Fission yeast), this protein is Small ribosomal subunit protein uS8m (mrps8).